A 204-amino-acid polypeptide reads, in one-letter code: Large ribosomal subunit protein uL3c (204 aa).

Residues 126–155 (HNFTRGPMTHGSKNHREPGSIGQGSTPAKV) form a disordered region.

It belongs to the universal ribosomal protein uL3 family. Part of the 50S ribosomal subunit.

It localises to the plastid. Its subcellular location is the chloroplast. One of the primary rRNA binding proteins, it binds directly near the 3'-end of the 23S rRNA, where it nucleates assembly of the 50S subunit. This is Large ribosomal subunit protein uL3c (rpl3) from Guillardia theta (Cryptophyte).